Reading from the N-terminus, the 328-residue chain is UPF0421 protein SERP1427 (328 aa).

A run of 4 helical transmembrane segments spans residues 26 to 46, 61 to 81, 109 to 129, and 132 to 152; these read LFCM…IVTI, LPAT…FGDQ, AVLT…FNFF, and LLTA…ILPP.

The protein belongs to the UPF0421 family.

The protein localises to the cell membrane. This is UPF0421 protein SERP1427 from Staphylococcus epidermidis (strain ATCC 35984 / DSM 28319 / BCRC 17069 / CCUG 31568 / BM 3577 / RP62A).